A 182-amino-acid polypeptide reads, in one-letter code: Ferritin heavy chain (182 aa).

Residue Met-1 is modified to N-acetylmethionine. The residue at position 2 (Thr-2) is an N-acetylthreonine; in Ferritin heavy chain, N-terminally processed. One can recognise a Ferritin-like diiron domain in the interval 11–160 (QNYHQDSEAA…DHVTNLRKMG (150 aa)). Fe cation contacts are provided by Glu-28, Glu-63, His-66, Glu-108, and Gln-142.

The protein belongs to the ferritin family. As to quaternary structure, oligomer of 24 subunits. There are two types of subunits: L (light) chain and H (heavy) chain. The major chain can be light or heavy, depending on the species and tissue type. The functional molecule forms a roughly spherical shell with a diameter of 12 nm and contains a central cavity into which the insoluble mineral iron core is deposited. Interacts with NCOA4; NCOA4 promotes targeting of the iron-binding ferritin complex to autolysosomes following starvation or iron depletion.

The protein resides in the cytoplasm. It localises to the lysosome. The protein localises to the cytoplasmic vesicle. Its subcellular location is the autophagosome. The catalysed reaction is 4 Fe(2+) + O2 + 4 H(+) = 4 Fe(3+) + 2 H2O. Functionally, stores iron in a soluble, non-toxic, readily available form. Important for iron homeostasis. Has ferroxidase activity. Iron is taken up in the ferrous form and deposited as ferric hydroxides after oxidation. Also plays a role in delivery of iron to cells. Mediates iron uptake in capsule cells of the developing kidney. Delivery to lysosomes is mediated by the cargo receptor NCOA4 for autophagic degradation and release of iron. The protein is Ferritin heavy chain (Fth1) of Rattus norvegicus (Rat).